The following is a 218-amino-acid chain: Pyridoxine/pyridoxamine 5'-phosphate oxidase (218 aa).

Substrate is bound by residues 14 to 17 (RREY) and Lys72. FMN is bound by residues 67 to 72 (RIVLLK), 82 to 83 (YT), Arg88, Lys89, and Gln111. Positions 129, 133, and 137 each coordinate substrate. Residues 146 to 147 (QS) and Trp191 contribute to the FMN site. 197 to 199 (RLH) contributes to the substrate binding site. Position 201 (Arg201) interacts with FMN.

This sequence belongs to the pyridoxamine 5'-phosphate oxidase family. Homodimer. FMN is required as a cofactor.

The catalysed reaction is pyridoxamine 5'-phosphate + O2 + H2O = pyridoxal 5'-phosphate + H2O2 + NH4(+). It carries out the reaction pyridoxine 5'-phosphate + O2 = pyridoxal 5'-phosphate + H2O2. It functions in the pathway cofactor metabolism; pyridoxal 5'-phosphate salvage; pyridoxal 5'-phosphate from pyridoxamine 5'-phosphate: step 1/1. Its pathway is cofactor metabolism; pyridoxal 5'-phosphate salvage; pyridoxal 5'-phosphate from pyridoxine 5'-phosphate: step 1/1. Its function is as follows. Catalyzes the oxidation of either pyridoxine 5'-phosphate (PNP) or pyridoxamine 5'-phosphate (PMP) into pyridoxal 5'-phosphate (PLP). This chain is Pyridoxine/pyridoxamine 5'-phosphate oxidase, found in Cronobacter sakazakii (strain ATCC BAA-894) (Enterobacter sakazakii).